A 142-amino-acid polypeptide reads, in one-letter code: Large ribosomal subunit protein uL13 (142 aa).

It belongs to the universal ribosomal protein uL13 family. In terms of assembly, part of the 50S ribosomal subunit.

This protein is one of the early assembly proteins of the 50S ribosomal subunit, although it is not seen to bind rRNA by itself. It is important during the early stages of 50S assembly. The polypeptide is Large ribosomal subunit protein uL13 (Psychromonas ingrahamii (strain DSM 17664 / CCUG 51855 / 37)).